We begin with the raw amino-acid sequence, 44 residues long: Mu-conotoxin-like Cal 12.1.3b (44 aa).

Disulfide bonds link Cys3/Cys16, Cys11/Cys28, Cys18/Cys33, and Cys27/Cys38. Pro23 is subject to 4-hydroxyproline. 6'-bromotryptophan is present on residues Trp36 and Trp37. 4-hydroxyproline is present on Pro39. Residue Trp43 is modified to 6'-bromotryptophan.

As to expression, expressed by the venom duct.

The protein resides in the secreted. Functionally, mu-conotoxins block voltage-gated sodium channels. This toxin reversibly blocks voltage-gated sodium channel in cephalopods, with no alteration in the voltage dependence of sodium conductance or on the kinetics of inactivation. In Californiconus californicus (California cone), this protein is Mu-conotoxin-like Cal 12.1.3b.